Consider the following 291-residue polypeptide: Bis(5'-nucleosyl)-tetraphosphatase, symmetrical (291 aa).

This sequence belongs to the Ap4A hydrolase family.

The catalysed reaction is P(1),P(4)-bis(5'-adenosyl) tetraphosphate + H2O = 2 ADP + 2 H(+). Its function is as follows. Hydrolyzes diadenosine 5',5'''-P1,P4-tetraphosphate to yield ADP. In Coxiella burnetii (strain RSA 331 / Henzerling II), this protein is Bis(5'-nucleosyl)-tetraphosphatase, symmetrical.